A 438-amino-acid polypeptide reads, in one-letter code: Acid phosphatase type 7 (438 aa).

The N-terminal stretch at 1 to 23 (MSPFLGGWLFFCMLLPFSPGVQG) is a signal peptide. Fe cation contacts are provided by aspartate 141, aspartate 170, and tyrosine 173. A Zn(2+)-binding site is contributed by aspartate 170. Asparagine 205 contacts Zn(2+). An N-linked (GlcNAc...) asparagine glycan is attached at asparagine 211. The Zn(2+) site is built by histidine 286 and histidine 333. Fe cation is bound at residue histidine 335. N-linked (GlcNAc...) asparagine glycosylation is found at asparagine 350 and asparagine 404.

This sequence belongs to the metallophosphoesterase superfamily. Purple acid phosphatase family. It depends on Fe cation as a cofactor. Zn(2+) serves as cofactor.

The protein resides in the secreted. The catalysed reaction is a phosphate monoester + H2O = an alcohol + phosphate. This is Acid phosphatase type 7 from Mus musculus (Mouse).